A 232-amino-acid polypeptide reads, in one-letter code: MGRSPCCEKAHTNKGAWTKEEDDRLVAYIRAHGEGCWRSLPKAAGLLRCGKSCRLRWINYLRPDLKRGNFTEEEDELIIKLHSLLGNKWSLIAGRLPGRTDNEIKNYWNTHIRRKLLSRGIDPTTHRSINDGTASQDQVTTISFSNANSKEEDTKHKVAVDIMIKEENSPVQERCPDLNLDLKISPPCQQQINYHQENLKTGGRNGSSTLCFVCRLGIQNSKDCSCSDGVGN.

2 HTH myb-type domains span residues Lys9–Leu61 and Arg62–Leu116. 2 consecutive DNA-binding regions (H-T-H motif) follow at residues Trp37–Leu61 and Trp89–Ile112.

As to expression, expressed in roots, stems, leaves, seed pods and flowers.

The protein resides in the nucleus. Transcription factor. This is Myb-related protein 308 from Antirrhinum majus (Garden snapdragon).